The following is a 471-amino-acid chain: Methylenetetrahydrofolate--tRNA-(uracil-5-)-methyltransferase TrmFO (471 aa).

FAD is bound at residue 9–14; sequence GGGLSG.

The protein belongs to the MnmG family. TrmFO subfamily. The cofactor is FAD.

The protein localises to the cytoplasm. It catalyses the reaction uridine(54) in tRNA + (6R)-5,10-methylene-5,6,7,8-tetrahydrofolate + NADH + H(+) = 5-methyluridine(54) in tRNA + (6S)-5,6,7,8-tetrahydrofolate + NAD(+). The enzyme catalyses uridine(54) in tRNA + (6R)-5,10-methylene-5,6,7,8-tetrahydrofolate + NADPH + H(+) = 5-methyluridine(54) in tRNA + (6S)-5,6,7,8-tetrahydrofolate + NADP(+). In terms of biological role, catalyzes the folate-dependent formation of 5-methyl-uridine at position 54 (M-5-U54) in all tRNAs. This chain is Methylenetetrahydrofolate--tRNA-(uracil-5-)-methyltransferase TrmFO, found in Beijerinckia indica subsp. indica (strain ATCC 9039 / DSM 1715 / NCIMB 8712).